We begin with the raw amino-acid sequence, 135 residues long: Small ribosomal subunit protein bS16 (135 aa).

Residues 105–120 (DEKKKPVLKPKTEKAA) are compositionally biased toward basic and acidic residues. Residues 105 to 135 (DEKKKPVLKPKTEKAAPEAAAPEAEATEEQA) form a disordered region.

The protein belongs to the bacterial ribosomal protein bS16 family.

The sequence is that of Small ribosomal subunit protein bS16 from Clavibacter sepedonicus (Clavibacter michiganensis subsp. sepedonicus).